The primary structure comprises 1043 residues: BAG family molecular chaperone regulator 6 (1043 aa).

Disordered stretches follow at residues 253 to 294 (KEEL…GKTV), 311 to 331 (DVKEAQNQKNKEEPGQVPYPI), 343 to 366 (VEASESKESSNEGRNLESCPSDLH), 410 to 500 (NIPV…AESR), and 533 to 566 (SVESNSNLQEESNGEIIKPCEAKENREQPAKKSF). 4 stretches are compositionally biased toward basic and acidic residues: residues 311-324 (DVKEAQNQKNKEEP), 343-357 (VEASESKESSNEGRN), 416-443 (SENHLPKPTEPTKRIAKNEPVKSTKKEQ), and 478-487 (KRMEKSKETK). Positions 534-543 (VESNSNLQEE) are enriched in polar residues. Over residues 550–566 (KPCEAKENREQPAKKSF) the composition is skewed to basic and acidic residues. The IQ domain occupies 568 to 597 (EEEAARIIQSMYRGYDVRRWEPIKKLKEIA). One can recognise a BAG domain in the interval 595–672 (EIATVREQMG…SIQDKLDSLK (78 aa)). Positions 724–741 (SPEEHPMSVLNRTDEKQA) are enriched in basic and acidic residues. 4 disordered regions span residues 724–749 (SPEEHPMSVLNRTDEKQAESAAETEE), 764–799 (ATENAAAASSTTIPEKIGEVETVVPGNPPSADGNGM), 817–975 (EPIN…ISKE), and 1015–1043 (EKKLSHKKKTQIRRRASKPMSVSPTDAVL). Low complexity predominate over residues 840–852 (ASEVSEAETNSSE). Over residues 853–871 (NENRKGEDDIVLHSEKNVE) the composition is skewed to basic and acidic residues. Composition is skewed to polar residues over residues 885 to 899 (QPLSQDPSSSYTREG) and 919 to 932 (SPNNSKGIGQQTSE). Positions 934–951 (QDEKEQSPETEVIVKEQP) are enriched in basic and acidic residues. A coiled-coil region spans residues 971 to 1024 (GISKETKKLMEENQRFKETMETLVKAGREQLEVISKLTSRVKSLEKKLSHKKKT). Over residues 1018–1031 (LSHKKKTQIRRRAS) the composition is skewed to basic residues. Positions 1034–1043 (MSVSPTDAVL) are enriched in polar residues.

Binds to the ATPase domain of HSP70/HSC70 chaperones. Interacts with calmodulins CAM1, CAM2, CAM3, CAM4, CAM6 and CAM7. Interacts with BAGP1 and APCB1. As to expression, detected in stems, leaves, flowers and roots.

Its function is as follows. Co-chaperone that regulates diverse cellular pathways, such as programmed cell death and stress responses. Involved in plant basal resistance. Involved in basal heat response through the regulation of the heat induced small HSP (sHSP) transcriptional cascade. Functionally, induces autophagy. This Arabidopsis thaliana (Mouse-ear cress) protein is BAG family molecular chaperone regulator 6.